We begin with the raw amino-acid sequence, 327 residues long: Type II methyltransferase M.HhaI (327 aa).

One can recognise an SAM-dependent MTase C5-type domain in the interval 12 to 325 (LRFIDLFAGL…YNIGSSLNFK (314 aa)). Residue C81 is part of the active site.

Belongs to the class I-like SAM-binding methyltransferase superfamily. C5-methyltransferase family. As to quaternary structure, monomer.

It carries out the reaction a 2'-deoxycytidine in DNA + S-adenosyl-L-methionine = a 5-methyl-2'-deoxycytidine in DNA + S-adenosyl-L-homocysteine + H(+). A methylase, recognizes the double-stranded sequence 5'-GCGC-3', methylates C-2 on both strands, and protects the DNA from cleavage by the HhaI endonuclease. In Haemophilus parahaemolyticus, this protein is Type II methyltransferase M.HhaI (hhaIM).